The primary structure comprises 237 residues: Phosphoribosylaminoimidazole-succinocarboxamide synthase (237 aa).

The protein belongs to the SAICAR synthetase family.

The enzyme catalyses 5-amino-1-(5-phospho-D-ribosyl)imidazole-4-carboxylate + L-aspartate + ATP = (2S)-2-[5-amino-1-(5-phospho-beta-D-ribosyl)imidazole-4-carboxamido]succinate + ADP + phosphate + 2 H(+). It functions in the pathway purine metabolism; IMP biosynthesis via de novo pathway; 5-amino-1-(5-phospho-D-ribosyl)imidazole-4-carboxamide from 5-amino-1-(5-phospho-D-ribosyl)imidazole-4-carboxylate: step 1/2. The protein is Phosphoribosylaminoimidazole-succinocarboxamide synthase of Escherichia coli O127:H6 (strain E2348/69 / EPEC).